We begin with the raw amino-acid sequence, 208 residues long: TnpB-like protein MJ0012 (208 aa).

Zn(2+) contacts are provided by Cys83, Cys86, Cys100, and Cys103.

It belongs to the transposase 35 family.

The chain is TnpB-like protein MJ0012 from Methanocaldococcus jannaschii (strain ATCC 43067 / DSM 2661 / JAL-1 / JCM 10045 / NBRC 100440) (Methanococcus jannaschii).